The chain runs to 851 residues: Envelope glycoprotein gp160 (851 aa).

Positions methionine 1 to glutamate 32 are cleaved as a signal peptide. Residues lysine 33–leucine 679 are Extracellular-facing. An intrachain disulfide couples cysteine 54 to cysteine 74. Asparagine 88, asparagine 136, asparagine 141, asparagine 156, asparagine 160, asparagine 186, asparagine 197, asparagine 230, asparagine 234, asparagine 241, asparagine 262, asparagine 276, asparagine 295, asparagine 301, asparagine 332, asparagine 339, and asparagine 356 each carry an N-linked (GlcNAc...) asparagine; by host glycan. 5 cysteine pairs are disulfide-bonded: cysteine 119/cysteine 205, cysteine 126/cysteine 196, cysteine 131/cysteine 157, cysteine 218/cysteine 247, and cysteine 228/cysteine 239. The segment at cysteine 131 to asparagine 156 is V1. A V2 region spans residues cysteine 157 to cysteine 196. A V3 region spans residues cysteine 296 to histidine 330. A disulfide bridge links cysteine 296 with cysteine 331. Residues serine 364 to histidine 374 form a CD4-binding loop region. Cystine bridges form between cysteine 378/cysteine 440 and cysteine 385/cysteine 413. Positions cysteine 385–cysteine 413 are V4. N-linked (GlcNAc...) asparagine; by host glycans are attached at residues asparagine 386, asparagine 392, asparagine 401, asparagine 443, and asparagine 458. V5 regions lie at residues serine 456–glycine 466 and asparagine 458–glycine 466. Residues alanine 507 to alanine 527 are fusion peptide. Residues lysine 569–leucine 587 are immunosuppression. A disulfide bond links cysteine 593 and cysteine 599. Asparagine 606, asparagine 611, asparagine 620, asparagine 632, and asparagine 669 each carry an N-linked (GlcNAc...) asparagine; by host glycan. Residues arginine 628–alanine 662 are a coiled coil. The segment at glutamate 657–lysine 678 is MPER; binding to GalCer. The chain crosses the membrane as a helical span at residues phenylalanine 680–valine 700. Residues asparagine 701–leucine 851 are Cytoplasmic-facing. Positions tyrosine 707 to leucine 710 match the YXXL motif; contains endocytosis signal motif. The disordered stretch occupies residues glutamine 713–arginine 735. Residue cysteine 759 is the site of S-palmitoyl cysteine; by host attachment. A Di-leucine internalization motif motif is present at residues leucine 850–leucine 851.

Belongs to the HIV-1 env protein family. In terms of assembly, the mature envelope protein (Env) consists of a homotrimer of non-covalently associated gp120-gp41 heterodimers. The resulting complex protrudes from the virus surface as a spike. There seems to be as few as 10 spikes on the average virion. Interacts with host CD4, CCR5 and CXCR4. Gp120 also interacts with the C-type lectins CD209/DC-SIGN and CLEC4M/DC-SIGNR (collectively referred to as DC-SIGN(R)). Gp120 and gp41 interact with GalCer. Gp120 interacts with host ITGA4/ITGB7 complex; on CD4+ T-cells, this interaction results in rapid activation of integrin ITGAL/LFA-1, which facilitates efficient cell-to-cell spreading of HIV-1. Gp120 interacts with cell-associated heparan sulfate; this interaction increases virus infectivity on permissive cells and may be involved in infection of CD4- cells. As to quaternary structure, the mature envelope protein (Env) consists of a homotrimer of non-covalently associated gp120-gp41 heterodimers. The resulting complex protrudes from the virus surface as a spike. There seems to be as few as 10 spikes on the average virion. Highly glycosylated by host. The high number of glycan on the protein is reffered to as 'glycan shield' because it contributes to hide protein sequence from adaptive immune system. In terms of processing, palmitoylation of the transmembrane protein and of Env polyprotein (prior to its proteolytic cleavage) is essential for their association with host cell membrane lipid rafts. Palmitoylation is therefore required for envelope trafficking to classical lipid rafts, but not for viral replication. Post-translationally, specific enzymatic cleavages in vivo yield mature proteins. Envelope glycoproteins are synthesized as an inactive precursor that is heavily N-glycosylated and processed likely by host cell furin in the Golgi to yield the mature SU and TM proteins. The cleavage site between SU and TM requires the minimal sequence [KR]-X-[KR]-R. About 2 of the 9 disulfide bonds of gp41 are reduced by P4HB/PDI, following binding to CD4 receptor.

It is found in the virion membrane. Its subcellular location is the host cell membrane. It localises to the host endosome membrane. Its function is as follows. Oligomerizes in the host endoplasmic reticulum into predominantly trimers. In a second time, gp160 transits in the host Golgi, where glycosylation is completed. The precursor is then proteolytically cleaved in the trans-Golgi and thereby activated by cellular furin or furin-like proteases to produce gp120 and gp41. In terms of biological role, attaches the virus to the host lymphoid cell by binding to the primary receptor CD4. This interaction induces a structural rearrangement creating a high affinity binding site for a chemokine coreceptor like CXCR4 and/or CCR5. Acts as a ligand for CD209/DC-SIGN and CLEC4M/DC-SIGNR, which are respectively found on dendritic cells (DCs), and on endothelial cells of liver sinusoids and lymph node sinuses. These interactions allow capture of viral particles at mucosal surfaces by these cells and subsequent transmission to permissive cells. HIV subverts the migration properties of dendritic cells to gain access to CD4+ T-cells in lymph nodes. Virus transmission to permissive T-cells occurs either in trans (without DCs infection, through viral capture and transmission), or in cis (following DCs productive infection, through the usual CD4-gp120 interaction), thereby inducing a robust infection. In trans infection, bound virions remain infectious over days and it is proposed that they are not degraded, but protected in non-lysosomal acidic organelles within the DCs close to the cell membrane thus contributing to the viral infectious potential during DCs' migration from the periphery to the lymphoid tissues. On arrival at lymphoid tissues, intact virions recycle back to DCs' cell surface allowing virus transmission to CD4+ T-cells. Acts as a class I viral fusion protein. Under the current model, the protein has at least 3 conformational states: pre-fusion native state, pre-hairpin intermediate state, and post-fusion hairpin state. During fusion of viral and target intracellular membranes, the coiled coil regions (heptad repeats) assume a trimer-of-hairpins structure, positioning the fusion peptide in close proximity to the C-terminal region of the ectodomain. The formation of this structure appears to drive apposition and subsequent fusion of viral and target cell membranes. Complete fusion occurs in host cell endosomes and is dynamin-dependent, however some lipid transfer might occur at the plasma membrane. The virus undergoes clathrin-dependent internalization long before endosomal fusion, thus minimizing the surface exposure of conserved viral epitopes during fusion and reducing the efficacy of inhibitors targeting these epitopes. Membranes fusion leads to delivery of the nucleocapsid into the cytoplasm. This is Envelope glycoprotein gp160 from Homo sapiens (Human).